A 39-amino-acid polypeptide reads, in one-letter code: Pro-opiomelanocortin (39 aa).

S1 is subject to N-acetylserine. V13 carries the valine amide modification. S31 carries the phosphoserine modification.

The protein belongs to the POMC family. Expressed in the pituitary gland.

It localises to the secreted. Its function is as follows. Precursor protein for pituitary hormones that regulate stress and environmental adaptation. Stimulates the adrenal glands to release cortisol. In terms of biological role, anorexigenic peptide. Increases the pigmentation of skin by increasing melanin production in melanocytes. The polypeptide is Pro-opiomelanocortin (POMC) (Oryctolagus cuniculus (Rabbit)).